The primary structure comprises 303 residues: Acetaldehyde dehydrogenase 1 (303 aa).

Cysteine 130 functions as the Acyl-thioester intermediate in the catalytic mechanism. NAD(+)-binding positions include 161-169 and asparagine 272; that span reads SVGPGTRKN.

It belongs to the acetaldehyde dehydrogenase family.

The enzyme catalyses acetaldehyde + NAD(+) + CoA = acetyl-CoA + NADH + H(+). The sequence is that of Acetaldehyde dehydrogenase 1 from Methylibium petroleiphilum (strain ATCC BAA-1232 / LMG 22953 / PM1).